The chain runs to 117 residues: Large ribosomal subunit protein bL20c (117 aa).

Belongs to the bacterial ribosomal protein bL20 family.

It localises to the plastid. Its subcellular location is the chloroplast. Functionally, binds directly to 23S ribosomal RNA and is necessary for the in vitro assembly process of the 50S ribosomal subunit. It is not involved in the protein synthesizing functions of that subunit. The protein is Large ribosomal subunit protein bL20c of Drimys granadensis.